The sequence spans 539 residues: 3-hydroxy-3-methylglutaryl-coenzyme A reductase 1 (539 aa).

Residues 63-83 (FATVVCQLASVVYLLSLFAHP) form a helical membrane-spanning segment. The linker stretch occupies residues 84-124 (DAPATTTGDDDDGQGGSRRARPAAAEPAPMHGHGGGMMEAD). Positions 87-116 (ATTTGDDDDGQGGSRRARPAAAEPAPMHGH) are disordered. Positions 105–114 (PAAAEPAPMH) are enriched in low complexity. The segment at 125–539 (DEEIVAAVAS…SSKDVAKAAS (415 aa)) is catalytic. The active-site Charge relay system is the Glu-218. The N-linked (GlcNAc...) asparagine glycan is linked to Asn-282. Catalysis depends on charge relay system residues Lys-350 and Asp-426. Residues 496–516 (LATIVAGSVLAGELSLLAALA) form a helical membrane-spanning segment. The Proton donor role is filled by His-524. Asn-528 is a glycosylation site (N-linked (GlcNAc...) asparagine).

This sequence belongs to the HMG-CoA reductase family.

The protein localises to the endoplasmic reticulum membrane. It carries out the reaction (R)-mevalonate + 2 NADP(+) + CoA = (3S)-3-hydroxy-3-methylglutaryl-CoA + 2 NADPH + 2 H(+). It functions in the pathway metabolic intermediate biosynthesis; (R)-mevalonate biosynthesis; (R)-mevalonate from acetyl-CoA: step 3/3. Catalyzes the synthesis of mevalonate. The specific precursor of all isoprenoid compounds present in plants. The protein is 3-hydroxy-3-methylglutaryl-coenzyme A reductase 1 (HMG1) of Oryza sativa subsp. indica (Rice).